We begin with the raw amino-acid sequence, 532 residues long: Cocaine esterase (532 aa).

At Q1 the chain carries Pyrrolidone carboxylic acid. C69 and C96 are disulfide-bonded. S201 (acyl-ester intermediate) is an active-site residue. An N-linked (GlcNAc...) asparagine glycan is attached at N249. C253 and C264 are disulfide-bonded. Catalysis depends on charge relay system residues E318 and H430. The short motif at 529-532 (HTEL) is the Prevents secretion from ER element.

Belongs to the type-B carboxylesterase/lipase family. In terms of assembly, monomer.

Its subcellular location is the endoplasmic reticulum lumen. It catalyses the reaction a carboxylic ester + H2O = an alcohol + a carboxylate + H(+). The catalysed reaction is cocaine + H2O = ecgonine methyl ester + benzoate + H(+). It carries out the reaction 2-(5Z,8Z,11Z,14Z-eicosatetraenoyl)-glycerol + H2O = glycerol + (5Z,8Z,11Z,14Z)-eicosatetraenoate + H(+). The enzyme catalyses prostaglandin E2 1-glyceryl ester + H2O = prostaglandin E2 + glycerol + H(+). It catalyses the reaction prostaglandin F2alpha 1-glyceryl ester + H2O = prostaglandin F2alpha + glycerol + H(+). Involved in the detoxification of xenobiotics and in the activation of ester and amide prodrugs. Converts monoacylglycerides to free fatty acids and glycerol. Hydrolyzes of 2-arachidonoylglycerol and prostaglandins. In Oryctolagus cuniculus (Rabbit), this protein is Cocaine esterase (CES2).